The chain runs to 147 residues: uncharacterized protein (147 aa).

The HTH LytTR-type domain maps to 44–147 (LVGYIDKEIH…LKSIKERLSI (104 aa)).

The protein localises to the cytoplasm. This is an uncharacterized protein from Staphylococcus aureus (strain COL).